Consider the following 170-residue polypeptide: Small ribosomal subunit protein uS3mB (170 aa).

A mitochondrion-targeting transit peptide spans 1 to 30 (MAAPVMSAFGRLQGLIRTERSLLTHVQSRC).

This sequence belongs to the universal ribosomal protein uS3 family. In terms of assembly, component of the mitochondrial ribosome small subunit (28S) which comprises a 12S rRNA and about 30 distinct proteins.

Its subcellular location is the mitochondrion. This is Small ribosomal subunit protein uS3mB (mrps24-b) from Xenopus laevis (African clawed frog).